Reading from the N-terminus, the 532-residue chain is Pre-piRNA 3'-exonuclease trimmer (532 aa).

Residues D28, E30, D270, and D365 each contribute to the Mg(2+) site. The helical transmembrane segment at 503–523 (AGRFAIWSGSIVTGGLALYLI) threads the bilayer.

Belongs to the CAF1 family. In terms of assembly, interacts with Papi/Tdrkh; interaction takes place on the mitochondrial surface and recruits PNLDC1/trimmer to PIWI-bound pre-piRNAs. The cofactor is Mg(2+).

The protein localises to the mitochondrion outer membrane. 3'-5' exonuclease that specifically cleaves precursor piRNAs (pre-piRNAs) at their 3' ends. Trims pre-piRNAs to their mature size, a process required for piRNAs maturation and stabilization, and subsequent pre-piRNAs 2'-O-methylation. The piRNA metabolic process mediates the repression of transposable elements during meiosis by forming complexes composed of piRNAs and Piwi proteins and govern the methylation and subsequent repression of transposons. This is Pre-piRNA 3'-exonuclease trimmer from Bombyx mori (Silk moth).